The sequence spans 263 residues: Methylesterase 4 (263 aa).

Ser-84 (acyl-ester intermediate) is an active-site residue. Active-site charge relay system residues include Asp-213 and His-241.

This sequence belongs to the AB hydrolase superfamily. Methylesterase family.

It carries out the reaction methyl salicylate + H2O = salicylate + methanol + H(+). It participates in plant hormone biosynthesis. Its activity is regulated as follows. Esterase activity is down-regulated by salicylic acid (SA). In terms of biological role, methylesterase shown to have carboxylesterase activity and methyl salicylate (MeSA) esterase activity in vitro. In Arabidopsis thaliana (Mouse-ear cress), this protein is Methylesterase 4.